The sequence spans 1323 residues: Lysine-specific demethylase 3A (1323 aa).

Disordered stretches follow at residues 255 to 287 (TRTGAVKRKSSENNGSSVSKQAKSCSEASPSMC), 307 to 337 (ATPSSKDPRQQNTPQAANSPPNIGAKLPQGC), and 385 to 416 (SEPKGSCIQPKTNTDQESRLESAPQPVTGLPK). Serine 264 carries the post-translational modification Phosphoserine. Composition is skewed to polar residues over residues 266–283 (ENNGSSVSKQAKSCSEAS) and 307–327 (ATPSSKDPRQQNTPQAANSPP). At serine 325 the chain carries Phosphoserine. Serine 446 is subject to Phosphoserine. 2 disordered regions span residues 468-487 (AEKKVEPSHLGSQSQNLKET) and 495-517 (SCCTRSSNKTQTPPARKSVLTDP). Composition is skewed to polar residues over residues 477 to 486 (LGSQSQNLKE) and 495 to 507 (SCCTRSSNKTQTP). The C6-type zinc finger occupies 662 to 687 (CDVCDTTIFNLHWVCPRCGFGVCVDC). Positions 885–889 (LRNLL) match the LXXLL motif motif. Lysine 895 carries the post-translational modification N6-acetyllysine. One can recognise a JmjC domain in the interval 1060–1283 (MPSRFDDLMA…HCFWLTQEFR (224 aa)). Histidine 1122, aspartate 1124, and histidine 1251 together coordinate Fe cation.

Belongs to the JHDM2 histone demethylase family. As to quaternary structure, interacts with VRK1. Requires Fe(2+) as cofactor. As to expression, highly expressed in testis (at protein level). Also expressed at high levels in tissues responsive to sympathetic nerve activity such as brown adipose tissue and skeletal muscle.

The protein localises to the cytoplasm. It localises to the nucleus. The catalysed reaction is N(6),N(6)-dimethyl-L-lysyl(9)-[histone H3] + 2 2-oxoglutarate + 2 O2 = L-lysyl(9)-[histone H3] + 2 formaldehyde + 2 succinate + 2 CO2. Functionally, histone demethylase that specifically demethylates 'Lys-9' of histone H3, thereby playing a central role in histone code. Preferentially demethylates mono- and dimethylated H3 'Lys-9' residue, with a preference for dimethylated residue, while it has weak or no activity on trimethylated H3 'Lys-9'. Demethylation of Lys residue generates formaldehyde and succinate. Involved in hormone-dependent transcriptional activation, by participating in recruitment to androgen-receptor target genes, resulting in H3 'Lys-9' demethylation and transcriptional activation. Involved in spermatogenesis by regulating expression of target genes such as PRM1 and TNP1 which are required for packaging and condensation of sperm chromatin. Involved in obesity resistance through regulation of metabolic genes such as PPARA and UCP1. This chain is Lysine-specific demethylase 3A (Kdm3a), found in Mus musculus (Mouse).